A 94-amino-acid chain; its full sequence is Co-chaperonin GroES (94 aa).

It belongs to the GroES chaperonin family. Heptamer of 7 subunits arranged in a ring. Interacts with the chaperonin GroEL.

The protein localises to the cytoplasm. Together with the chaperonin GroEL, plays an essential role in assisting protein folding. The GroEL-GroES system forms a nano-cage that allows encapsulation of the non-native substrate proteins and provides a physical environment optimized to promote and accelerate protein folding. GroES binds to the apical surface of the GroEL ring, thereby capping the opening of the GroEL channel. The sequence is that of Co-chaperonin GroES from Lactobacillus gasseri (strain ATCC 33323 / DSM 20243 / BCRC 14619 / CIP 102991 / JCM 1131 / KCTC 3163 / NCIMB 11718 / NCTC 13722 / AM63).